A 500-amino-acid polypeptide reads, in one-letter code: Aspartyl/glutamyl-tRNA(Asn/Gln) amidotransferase subunit B (500 aa).

The protein belongs to the GatB/GatE family. GatB subfamily. As to quaternary structure, heterotrimer of A, B and C subunits.

The catalysed reaction is L-glutamyl-tRNA(Gln) + L-glutamine + ATP + H2O = L-glutaminyl-tRNA(Gln) + L-glutamate + ADP + phosphate + H(+). The enzyme catalyses L-aspartyl-tRNA(Asn) + L-glutamine + ATP + H2O = L-asparaginyl-tRNA(Asn) + L-glutamate + ADP + phosphate + 2 H(+). Its function is as follows. Allows the formation of correctly charged Asn-tRNA(Asn) or Gln-tRNA(Gln) through the transamidation of misacylated Asp-tRNA(Asn) or Glu-tRNA(Gln) in organisms which lack either or both of asparaginyl-tRNA or glutaminyl-tRNA synthetases. The reaction takes place in the presence of glutamine and ATP through an activated phospho-Asp-tRNA(Asn) or phospho-Glu-tRNA(Gln). This is Aspartyl/glutamyl-tRNA(Asn/Gln) amidotransferase subunit B from Rhizobium leguminosarum bv. trifolii (strain WSM2304).